We begin with the raw amino-acid sequence, 95 residues long: Translation initiation factor IF-1 (95 aa).

Positions 1–72 (MAKEELIEMD…TKARITYRHK (72 aa)) constitute an S1-like domain. Residues 70-95 (RHKVGGPPGPVTGGGNRPPPRQPRRR) are disordered. Over residues 86–95 (RPPPRQPRRR) the composition is skewed to pro residues.

It belongs to the IF-1 family. As to quaternary structure, component of the 30S ribosomal translation pre-initiation complex which assembles on the 30S ribosome in the order IF-2 and IF-3, IF-1 and N-formylmethionyl-tRNA(fMet); mRNA recruitment can occur at any time during PIC assembly.

It is found in the cytoplasm. Functionally, one of the essential components for the initiation of protein synthesis. Stabilizes the binding of IF-2 and IF-3 on the 30S subunit to which N-formylmethionyl-tRNA(fMet) subsequently binds. Helps modulate mRNA selection, yielding the 30S pre-initiation complex (PIC). Upon addition of the 50S ribosomal subunit IF-1, IF-2 and IF-3 are released leaving the mature 70S translation initiation complex. The sequence is that of Translation initiation factor IF-1 from Rhodospirillum rubrum (strain ATCC 11170 / ATH 1.1.1 / DSM 467 / LMG 4362 / NCIMB 8255 / S1).